The chain runs to 582 residues: PTS system lactose-specific EIICB component (582 aa).

A PTS EIIC type-3 domain is found at 8 to 409 (IEKGKPFFEK…VVDVIIYYPF (402 aa)). 9 helical membrane passes run 30 to 50 (GFIAAIPIILFSSIFILITYV), 64 to 84 (GILMKPYNYTMGIVGLLVAGT), 103 to 123 (INFISTMMAAICGFLFLAADP), 137 to 157 (KGLLTAFISAFITVIVYNFFV), 176 to 196 (VFKDIFPLSAVILILYALDLL), 222 to 242 (GWIGVTLIFGAFAFFWFVGIH), 283 to 303 (FVATMGGTGATLVVPFMFMWL), 339 to 359 (VFFIPFIFAPIVNIWIFKFFV), and 381 to 401 (IVMGTGFAFWSFVLAILLIVV). A disordered region spans residues 453–473 (ASEADTDDTSSVDETTSTSST). Over residues 464-473 (VDETTSTSST) the composition is skewed to low complexity. Residues 479–582 (QTNVLVLCAG…LEFVKQQFNN (104 aa)) form the PTS EIIB type-3 domain. The active-site Phosphocysteine intermediate; for EIIB activity is the C486. C486 carries the phosphocysteine; by EIIA modification.

It is found in the cell membrane. It carries out the reaction lactose(out) + N(pros)-phospho-L-histidyl-[protein] = lactose 6-phosphate(in) + L-histidyl-[protein]. The phosphoenolpyruvate-dependent sugar phosphotransferase system (sugar PTS), a major carbohydrate active transport system, catalyzes the phosphorylation of incoming sugar substrates concomitantly with their translocation across the cell membrane. The enzyme II LacEF PTS system is involved in lactose transport. In Staphylococcus epidermidis (strain ATCC 35984 / DSM 28319 / BCRC 17069 / CCUG 31568 / BM 3577 / RP62A), this protein is PTS system lactose-specific EIICB component.